The following is a 526-amino-acid chain: Glutamyl-tRNA(Gln) amidotransferase subunit A, mitochondrial (526 aa).

Active-site charge relay system residues include lysine 76 and serine 171. Catalysis depends on serine 195, which acts as the Acyl-ester intermediate.

The protein belongs to the amidase family. GatA subfamily. As to quaternary structure, subunit of the heterotrimeric GatCAB amidotransferase (AdT) complex, composed of A (QRSL1), B (GATB) and C (GATC) subunits.

The protein localises to the mitochondrion. It carries out the reaction L-glutamyl-tRNA(Gln) + L-glutamine + ATP + H2O = L-glutaminyl-tRNA(Gln) + L-glutamate + ADP + phosphate + H(+). Functionally, allows the formation of correctly charged Gln-tRNA(Gln) through the transamidation of misacylated Glu-tRNA(Gln) in the mitochondria. The reaction takes place in the presence of glutamine and ATP through an activated gamma-phospho-Glu-tRNA(Gln). This Canis lupus familiaris (Dog) protein is Glutamyl-tRNA(Gln) amidotransferase subunit A, mitochondrial.